Here is a 238-residue protein sequence, read N- to C-terminus: Tabinhibitin 5 (238 aa).

The N-terminal stretch at 1-23 (MTSILVSRFLLAALVLQYATIDA) is a signal peptide. The Cell attachment site signature appears at 32–34 (RGD). Residues 67–211 (LSKINDVRDH…KARALLTCNF (145 aa)) enclose the SCP domain.

This sequence belongs to the CRISP family. In terms of tissue distribution, expressed in salivary glands.

The protein resides in the secreted. Inhibits platelet aggregation induced by all agonists tested (ADP, arachidonic acid, the thromboxane A2 analog U46619, thrombin, and snake venom snaclecs (TMVA that activates platelet through GPIB, and stejnulxin that specifically acts through GPVI (GP6))). May act by competing with fibrinogen for binding to glycoprotein IIb/IIIa (ITGA2B/ITGB3). In Tabanus yao (Horsefly), this protein is Tabinhibitin 5.